Reading from the N-terminus, the 380-residue chain is Cytochrome b (380 aa).

The next 4 helical transmembrane spans lie at 34 to 54, 78 to 99, 114 to 134, and 179 to 199; these read FGSLLGICLMTQILTGLLLAM, WLIRNLHANGASFFFICIYLHI, WNTGVILLLTLMATAFVGYVL, and FFALHFLLPFMIAGLTLVHLT. Residues histidine 84 and histidine 98 each contribute to the heme b site. Heme b-binding residues include histidine 183 and histidine 197. Residue histidine 202 coordinates a ubiquinone. The next 4 helical transmembrane spans lie at 227–247, 289–309, 321–341, and 348–368; these read LKDILGFTLMFLLLTTLALFS, LGGVLALAASVLILFLAPFLH, LSQLLFWVLVANLFILTWVGS, and FIIIGQLASFTYFTILLILFP.

The protein belongs to the cytochrome b family. The cytochrome bc1 complex contains 11 subunits: 3 respiratory subunits (MT-CYB, CYC1 and UQCRFS1), 2 core proteins (UQCRC1 and UQCRC2) and 6 low-molecular weight proteins (UQCRH/QCR6, UQCRB/QCR7, UQCRQ/QCR8, UQCR10/QCR9, UQCR11/QCR10 and a cleavage product of UQCRFS1). This cytochrome bc1 complex then forms a dimer. Heme b serves as cofactor.

The protein localises to the mitochondrion inner membrane. Its function is as follows. Component of the ubiquinol-cytochrome c reductase complex (complex III or cytochrome b-c1 complex) that is part of the mitochondrial respiratory chain. The b-c1 complex mediates electron transfer from ubiquinol to cytochrome c. Contributes to the generation of a proton gradient across the mitochondrial membrane that is then used for ATP synthesis. The sequence is that of Cytochrome b (MT-CYB) from Procellaria westlandica (Westland petrel).